A 79-amino-acid chain; its full sequence is uncharacterized protein (79 aa).

The interval 1 to 37 is disordered; that stretch reads MQLDVFSRMMFGDAAKPTEEKEEEQQEEVSQVSQTND.

This is an uncharacterized protein from Bacillus subtilis (strain 168).